The primary structure comprises 282 residues: Elongation factor Ts (282 aa).

The involved in Mg(2+) ion dislocation from EF-Tu stretch occupies residues 80–83 (TDFV).

The protein belongs to the EF-Ts family.

It is found in the cytoplasm. Its function is as follows. Associates with the EF-Tu.GDP complex and induces the exchange of GDP to GTP. It remains bound to the aminoacyl-tRNA.EF-Tu.GTP complex up to the GTP hydrolysis stage on the ribosome. This Pasteurella multocida (strain Pm70) protein is Elongation factor Ts (tsf).